The chain runs to 298 residues: ATP phosphoribosyltransferase (298 aa).

Belongs to the ATP phosphoribosyltransferase family. Long subfamily. It depends on Mg(2+) as a cofactor.

The protein resides in the cytoplasm. It carries out the reaction 1-(5-phospho-beta-D-ribosyl)-ATP + diphosphate = 5-phospho-alpha-D-ribose 1-diphosphate + ATP. The protein operates within amino-acid biosynthesis; L-histidine biosynthesis; L-histidine from 5-phospho-alpha-D-ribose 1-diphosphate: step 1/9. With respect to regulation, feedback inhibited by histidine. Its function is as follows. Catalyzes the condensation of ATP and 5-phosphoribose 1-diphosphate to form N'-(5'-phosphoribosyl)-ATP (PR-ATP). Has a crucial role in the pathway because the rate of histidine biosynthesis seems to be controlled primarily by regulation of HisG enzymatic activity. This is ATP phosphoribosyltransferase (hisG) from Photobacterium profundum (strain SS9).